Here is a 175-residue protein sequence, read N- to C-terminus: MMTGLNTAGADRDLATAELNRELQDKGFLLTTTEDIINWARNGSLHWMTFGLACCAVEMMQTSMPRYDLERFGTAPRASPRQSDLMIVAGTLTNKMAPALRKVYDQMPEPRYVISMGSCANGGGYYHYSYSVVRGCDRIVPVDIYVPGCPPTAEALLYGILQLQRRIRRTGTLVR.

Residues Cys-54, Cys-55, Cys-119, and Cys-149 each contribute to the [4Fe-4S] cluster site.

It belongs to the complex I 20 kDa subunit family. NDH-1 is composed of at least 14 different subunits, Nqo1 to Nqo14. The complex has a L-shaped structure, with the hydrophobic arm (subunits Nqo7, Nqo8, Nqo10 to Nqo14) embedded in the inner membrane and the hydrophilic peripheral arm (subunits Nqo1 to Nqo6, Nqo9) protruding into the bacterial cytoplasm. The hydrophilic domain contains all the redox centers. NADH-quinone oxidoreductase forms a supercomplex with ubiquinol-cytochrome c reductase complex (complex III or cytochrome b-c1 complex) and cytochrome c oxidase (complex IV), which stabilizes the NADH-quinone oxidoreductase complex. It depends on [4Fe-4S] cluster as a cofactor.

The protein resides in the cell inner membrane. The catalysed reaction is a quinone + NADH + 5 H(+)(in) = a quinol + NAD(+) + 4 H(+)(out). NDH-1 shuttles electrons from NADH, via FMN and iron-sulfur (Fe-S) centers, to quinones in the respiratory chain. The immediate electron acceptor for the enzyme in this species is believed to be ubiquinone. Couples the redox reaction to proton translocation (for every two electrons transferred, four hydrogen ions are translocated across the cytoplasmic membrane), and thus conserves the redox energy in a proton gradient. This Paracoccus denitrificans (strain Pd 1222) protein is NADH-quinone oxidoreductase subunit B.